The sequence spans 441 residues: Lysine histidine transporter 2 (441 aa).

The Cytoplasmic portion of the chain corresponds to 1–32; the sequence is MGNSEMSASEVAAAKQKNVDDWLPITSSRNAK. A helical membrane pass occupies residues 33–53; it reads WWYSAFHNVTAMVGAGVLSLP. Residues 54 to 58 are Extracellular-facing; that stretch reads YAMSN. A helical transmembrane segment spans residues 59–79; sequence LGWGPGVTIMVMSWIITLYTL. Topologically, residues 80–110 are cytoplasmic; sequence WQMVEMHEIVPGKRLDRYHELGQHAFGEKLG. Residues 111–131 form a helical membrane-spanning segment; sequence LWIVVPQQLIVEVGVDIVYMV. At 132–152 the chain is on the extracellular side; it reads TGGASLKKVHQLVCPDCKEIR. A helical transmembrane segment spans residues 153 to 173; sequence TTFWIMIFASVHFVISHLPNF. Residues 174–175 lie on the Cytoplasmic side of the membrane; the sequence is NS. Residues 176–196 form a helical membrane-spanning segment; that stretch reads ISIISLAAAVMSLTYSTIAWA. The Extracellular segment spans residues 197–222; it reads ASVHKGVHPDVDYSPRASTDVGKVFN. The chain crosses the membrane as a helical span at residues 223 to 243; it reads FLNALGDVAFAYAGHNVVLEI. Over 244 to 263 the chain is Cytoplasmic; that stretch reads QATIPSTPEMPSKVPMWRGV. A helical transmembrane segment spans residues 264-284; the sequence is IVAYIVVAICYFPVAFLGYYI. Topologically, residues 285–300 are extracellular; it reads FGNSVDDNILITLEKP. The chain crosses the membrane as a helical span at residues 301 to 321; the sequence is IWLIAMANMFVVIHVIGSYQI. Over 322 to 347 the chain is Cytoplasmic; that stretch reads FAMPVFDMLETVLVKKMNFNPSFKLR. Residues 348 to 370 form a helical membrane-spanning segment; that stretch reads FITRSLYVAFTMIVAICVPFFGG. Topologically, residues 371-373 are extracellular; it reads LLG. Residues 374–396 form a helical membrane-spanning segment; it reads FFGGFAFAPTTYYLPCIMWLVLK. The Cytoplasmic segment spans residues 397-406; the sequence is KPKRFGLSWT. Residues 407–427 traverse the membrane as a helical segment; that stretch reads ANWFCIIVGVLLTILAPIGGL. The Extracellular portion of the chain corresponds to 428–441; the sequence is RTIIINAKTYKFFS.

Belongs to the amino acid/polyamine transporter 2 family. Amino acid/auxin permease (AAAP) (TC 2.A.18.2) subfamily. As to expression, expressed in flower buds and to lower levels in leaves and stems. Not detected in roots and siliques. Restricted to the tapetum cell layer.

The protein resides in the cell membrane. Inhibited by diethylstibestrol (DES), 2,4-dinitrophenol (DNP) and carbonlycyanide m-chlorophenylhydrazone (CCCP). In terms of biological role, amino acid-proton symporter. Transporter with a broad specificity for neutral and acidic amino acids. Basic amino acids are only marginally transported. Involved in import of amino acids into the tapetum cells for synthesis of compounds important for microspore structure. The sequence is that of Lysine histidine transporter 2 (LHT2) from Arabidopsis thaliana (Mouse-ear cress).